The following is a 415-amino-acid chain: Transfer protein TraSA (415 aa).

A FtsK domain is found at 127-326 (DGAVHYRDYR…HRVNDETSAN (200 aa)). An ATP-binding site is contributed by 145 to 152 (GATESGKS).

In Streptomyces ambofaciens, this protein is Transfer protein TraSA (traSA).